The primary structure comprises 377 residues: Caspase-4 (377 aa).

The required for LPS-binding stretch occupies residues 1 to 59 (MAEGNHRKKPLKVLESLGKDFLTGVLDNLVEQNVLNWKEEEKKKYYDAKTEDKVRVMAD). A propeptide spanning residues 1–80 (MAEGNHRKKP…MLLQTFFNID (80 aa)) is cleaved from the precursor. Residues 1–91 (MAEGNHRKKP…ISPNKKAHPN (91 aa)) form the CARD domain. Position 2 is an N-acetylalanine (alanine 2). A Phosphoserine modification is found at serine 83. Positions 84 to 104 (PNKKAHPNMEAGPPESGESTD) are disordered. Residues histidine 210 and cysteine 258 contribute to the active site. A propeptide spanning residues 271 to 289 (SPASLEVASSQSSENLEED) is cleaved from the precursor. Position 314 is a (Microbial infection) ADP-riboxanated arginine (arginine 314).

Belongs to the peptidase C14A family. As to quaternary structure, heterotetramer that consists of two anti-parallel arranged heterodimers, each one formed by a 20 kDa (Caspase-4 subunit p20) and a 10 kDa (Caspase-4 subunit p10) subunit. Upon direct LPS-binding, forms large homooligomers, resulting in its activation. These oligomers are often referred to as 'non-canonical inflammasomes'. In its precursor form, interacts with TMEM214; this interaction is required for association with the endoplasmic reticulum membrane. Interacts with CASP1. Interacts with NOD2. Interacts with SERPINB1; this interaction regulates CASP4 activity. Heterotetramer that consists of two anti-parallel arranged heterodimers, each one formed by a 20 kDa (Caspase-4 subunit p20) and a 10 kDa (Caspase-4 subunit p10) subunit. In terms of assembly, (Microbial infection) Interacts with NleF protein from pathogenic E.coli; this interaction leads to enzyme inhibition. As to quaternary structure, (Microbial infection) Interacts with cathepsin CTSG; the interaction is promoted by the Td92 surface protein of the periodontal pathogen T.denticola and leads to CASP4 activation. In terms of processing, in response to activation signals, undergoes autoproteolytic cleavage and activation. Post-translationally, (Microbial infection) ADP-riboxanation by S.flexneri OspC3 blocks CASP4 autoprocessing, preventing CASP4 activation and ability to recognize and cleave GSDMD, thereby thwarting the inflammasome/pyroptosis-mediated defense. In terms of tissue distribution, widely expressed, including in keratinocytes and colonic and small intestinal epithelial cells (at protein level). Not detected in brain.

It is found in the cytoplasm. Its subcellular location is the cytosol. The protein resides in the endoplasmic reticulum membrane. It localises to the mitochondrion. The protein localises to the inflammasome. It is found in the secreted. The enzyme catalyses Strict requirement for Asp at the P1 position. It has a preferred cleavage sequence of Tyr-Val-Ala-Asp-|- but also cleaves at Asp-Glu-Val-Asp-|-.. With respect to regulation, activated by homooligomerization induced by direct binding to cytosolic LPS, in a TLR4-independent manner. In addition to LPS, CASP4/CASP11 may also be activated by oxidized phospholipid 1-palmitoyl-2-arachidonoyl- sn-glycero-3-phosphorylcholine, an oxidized phospholipid (oxPAPC), in dendritic cells, promoting adaptive immunity. The role of oxPAPC is however unclear and another report suggests that oxPAPC competes with LPS-binding and inhibits the non-canonical inflammasome in macrophages. Its function is as follows. Inflammatory caspase that acts as the effector of the non-canonical inflammasome by mediating lipopolysaccharide (LPS)-induced pyroptosis. Also indirectly activates the NLRP3 and NLRP6 inflammasomes. Acts as a thiol protease that cleaves a tetrapeptide after an Asp residue at position P1: catalyzes cleavage of CGAS, GSDMD and IL18. Effector of the non-canonical inflammasome independently of NLRP3 inflammasome and CASP1: the non-canonical inflammasome promotes pyroptosis through GSDMD cleavage without involving secretion of cytokine IL1B. In the non-canonical inflammasome, CASP4 is activated by direct binding to the lipid A moiety of LPS without the need of an upstream sensor. LPS-binding promotes CASP4 activation and CASP4-mediated cleavage of GSDMD and IL18, followed by IL18 secretion through the GSDMD pore, pyroptosis of infected cells and their extrusion into the gut lumen. Also indirectly promotes secretion of mature cytokines (IL1A and HMGB1) downstream of GSDMD-mediated pyroptosis via activation of the NLRP3 and NLRP6 inflammasomes. Involved in NLRP3-dependent CASP1 activation and IL1B secretion in response to non-canonical activators, such as UVB radiation or cholera enterotoxin. Involved in NLRP6 inflammasome-dependent activation in response to lipoteichoic acid (LTA), a cell-wall component of Gram-positive bacteria, which leads to CASP1 activation and IL1B secretion. Involved in LPS-induced IL6 secretion; this activity may not require caspase enzymatic activity. The non-canonical inflammasome is required for innate immunity to cytosolic, but not vacuolar, bacteria. Plays a crucial role in the restriction of S.typhimurium replication in colonic epithelial cells during infection. Activation of the non-canonical inflammasome in brain endothelial cells can lead to excessive pyroptosis, leading to blood-brain barrier breakdown. Pyroptosis limits bacterial replication, while cytokine secretion promotes the recruitment and activation of immune cells and triggers mucosal inflammation. May also act as an activator of adaptive immunity in dendritic cells, following activation by oxidized phospholipid 1-palmitoyl-2-arachidonoyl- sn-glycero-3-phosphorylcholine, an oxidized phospholipid (oxPAPC). Involved in cell death induced by endoplasmic reticulum stress and by treatment with cytotoxic APP peptides found in Alzheimer's patient brains. Cleavage of GSDMD is not strictly dependent on the consensus cleavage site but depends on an exosite interface on CASP4 that recognizes and binds the Gasdermin-D, C-terminal (GSDMD-CT) part. Catalyzes cleavage and maturation of IL18; IL18 processing also depends of the exosite interface on CASP4. In contrast, it does not directly process IL1B. During non-canonical inflammasome activation, cuts CGAS and may play a role in the regulation of antiviral innate immune activation. In terms of biological role, (Microbial infection) In response to the Td92 surface protein of the periodontal pathogen T.denticola, activated by cathepsin CTSG which leads to production and secretion of IL1A and pyroptosis of gingival fibroblasts. This chain is Caspase-4, found in Homo sapiens (Human).